Consider the following 1421-residue polypeptide: ALK tyrosine kinase receptor homolog scd-2 (1421 aa).

The signal sequence occupies residues 1-20; that stretch reads MRKRRLWWFVVLFRVTLVGA. The Extracellular segment spans residues 21–903; the sequence is ILPNETFDVR…DTCEEIQIWT (883 aa). Asn24, Asn44, Asn70, Asn83, Asn119, and Asn201 each carry an N-linked (GlcNAc...) asparagine glycan. In terms of domain architecture, LDL-receptor class A spans 300–338; that stretch reads QCSRGDQFLCSISANTRCLQNAQCDSRIDCDDESDEMDC. Cystine bridges form between Cys301–Cys317, Cys309–Cys329, and Cys323–Cys338. The MAM domain occupies 339–542; sequence GNINGTMCDF…NLSFSPTCFE (204 aa). N-linked (GlcNAc...) asparagine glycans are attached at residues Asn342, Asn362, Asn495, Asn533, Asn546, Asn633, Asn726, Asn793, Asn849, Asn873, and Asn893. A helical membrane pass occupies residues 904–924; it reads LYNITFLIFAALTIIGALFVV. At 925–1421 the chain is on the cytoplasmic side; the sequence is YHYRNREKQM…SVPLLECQTR (497 aa). A Protein kinase domain is found at 976 to 1261; that stretch reads IERGRVLGRG…GMPFPIHPAV (286 aa). Residues 982–990 and Lys1003 contribute to the ATP site; that span reads LGRGNFGEV. The Proton acceptor role is filled by Asp1106.

It belongs to the protein kinase superfamily. Tyr protein kinase family. Insulin receptor subfamily. Interacts (via cytoplasmic domain) with fsn-1 (via SPRY domain). Expressed in AIA sensory neurons.

The protein localises to the cell membrane. The catalysed reaction is L-tyrosyl-[protein] + ATP = O-phospho-L-tyrosyl-[protein] + ADP + H(+). Probable tyrosine-protein kinase receptor which regulates the dauer/non-dauer developmental decision probably by controlling daf-3 transcriptional activity in parallel or together with the TGF-beta pathway. Regulates integration of conflicting sensory cues in AIA interneurons. May act as a receptor for hen-1. In AWA neurons, together with hen-1, plays a role in regulating olfactory adaptation by controlling the forgetting sensory responses to odorants such as diacetyl. The sequence is that of ALK tyrosine kinase receptor homolog scd-2 from Caenorhabditis elegans.